Consider the following 361-residue polypeptide: dTDP-glucose 4,6-dehydratase (361 aa).

Residues 11-12 (FI), 32-35 (DKLT), 58-59 (DI), 80-84 (LAAES), and Thr99 contribute to the NAD(+) site. Position 84 (Ser84) interacts with substrate. Substrate is bound at residue Thr133. Asp134 (proton donor) is an active-site residue. Active-site proton acceptor residues include Glu135 and Tyr167. An NAD(+)-binding site is contributed by 167–171 (YSASK). Asn196 provides a ligand contact to substrate. Position 197 (Asn197) interacts with NAD(+). Residues 206–207 (KL), 222–224 (PIY), Arg231, Asn266, 296–300 (DRPGH), and Tyr357 each bind substrate.

This sequence belongs to the NAD(P)-dependent epimerase/dehydratase family. dTDP-glucose dehydratase subfamily. In terms of assembly, homodimer. The cofactor is NAD(+).

The enzyme catalyses dTDP-alpha-D-glucose = dTDP-4-dehydro-6-deoxy-alpha-D-glucose + H2O. It participates in carbohydrate biosynthesis; dTDP-L-rhamnose biosynthesis. It functions in the pathway bacterial outer membrane biogenesis; LPS O-antigen biosynthesis. Its function is as follows. Catalyzes the dehydration of dTDP-D-glucose to form dTDP-6-deoxy-D-xylo-4-hexulose via a three-step process involving oxidation, dehydration and reduction. This chain is dTDP-glucose 4,6-dehydratase, found in Salmonella typhimurium (strain LT2 / SGSC1412 / ATCC 700720).